The following is a 294-amino-acid chain: Type I ribosome-inactivating protein trichoanguina (294 aa).

An N-terminal signal peptide occupies residues 1-19; sequence MALSFFFLAISLGSPTAIG. N-linked (GlcNAc...) asparagine glycosylation is present at Asn-70. Residues Glu-177 and Arg-180 contribute to the active site. Asn-220 carries N-linked (GlcNAc...) asparagine glycosylation. The propeptide occupies 265-294; sequence VGSEYDIPTTILHPGAMGMLHNQNGNYVTM.

The protein belongs to the ribosome-inactivating protein family. Type 1 RIP subfamily.

It catalyses the reaction Endohydrolysis of the N-glycosidic bond at one specific adenosine on the 28S rRNA.. Inhibits protein synthesis by depurinating 28S rRNA in ribosomes. This chain is Type I ribosome-inactivating protein trichoanguina (TCA), found in Trichosanthes anguina (Snake gourd).